The primary structure comprises 279 residues: MCSGLRIIADDGTVVVGRTLEFGENILKFKKFVNGNIRGISTPDGKLLDGMNEHGLVIFVFYFKNYAKYGCPSQTKLNIKPTEVALFLLQKAKNVKDVKAIAKTLNVIHESYPPFTETPPMHWLVTDASGKSIVLEPLGNGELTVFDNPMGIFTNAPTFPEHMESAKKALEHLSPISDPNAASQGTGALGLPGDFSSASRFIRLAFFSQTIEIPRTSAGAVNTLFHVLNNFDIPKGVVASINMNTGKHVYEKTIYTVIYNIKSKEIVFKHYNDQNIQKL.

This sequence belongs to the peptidase C59 family.

This is an uncharacterized protein from Chlorella (PBCV-1).